The following is a 117-amino-acid chain: UPF0102 protein YE3728 (117 aa).

Belongs to the UPF0102 family.

This chain is UPF0102 protein YE3728, found in Yersinia enterocolitica serotype O:8 / biotype 1B (strain NCTC 13174 / 8081).